A 64-amino-acid polypeptide reads, in one-letter code: Large ribosomal subunit protein bL35 (64 aa).

Residues 1 to 25 (MPKLKTHSGAAKRFKKTATGKVKRS) are disordered.

The protein belongs to the bacterial ribosomal protein bL35 family.

The polypeptide is Large ribosomal subunit protein bL35 (Koribacter versatilis (strain Ellin345)).